A 97-amino-acid polypeptide reads, in one-letter code: Putative defensin-like protein 240 (97 aa).

An N-terminal signal peptide occupies residues methionine 1–glycine 23. Cystine bridges form between cysteine 29–cysteine 88, cysteine 39–cysteine 69, cysteine 47–cysteine 85, and cysteine 67–cysteine 87.

It belongs to the DEFL family.

It localises to the secreted. This is Putative defensin-like protein 240 (SCRL18) from Arabidopsis thaliana (Mouse-ear cress).